The chain runs to 297 residues: Probable lipid kinase YegS-like (297 aa).

Residues 2-131 (STFPASLLIL…IDIARVNDKT (130 aa)) form the DAGKc domain. ATP contacts are provided by residues Thr40, 66–72 (GDGTINE), and Thr93. Residues Leu213, Asp216, and Leu218 each contribute to the Mg(2+) site. Glu269 (proton acceptor) is an active-site residue.

It belongs to the diacylglycerol/lipid kinase family. YegS lipid kinase subfamily. The cofactor is Mg(2+). It depends on Ca(2+) as a cofactor.

It localises to the cytoplasm. Functionally, probably phosphorylates lipids; the in vivo substrate is unknown. The chain is Probable lipid kinase YegS-like from Klebsiella pneumoniae (strain 342).